Consider the following 88-residue polypeptide: Small ribosomal subunit protein uS17 (88 aa).

Belongs to the universal ribosomal protein uS17 family. In terms of assembly, part of the 30S ribosomal subunit.

One of the primary rRNA binding proteins, it binds specifically to the 5'-end of 16S ribosomal RNA. The chain is Small ribosomal subunit protein uS17 from Xylella fastidiosa (strain M23).